The primary structure comprises 556 residues: Glutamine--tRNA ligase (556 aa).

Positions 39 to 49 (PEPNGYLHIGH) match the 'HIGH' region motif. Residues 40 to 42 (EPN) and 46 to 52 (HIGHAKS) contribute to the ATP site. Residues D72 and Y217 each contribute to the L-glutamine site. ATP is bound by residues T236 and 267–268 (RL). A 'KMSKS' region motif is present at residues 274-278 (LTSKR).

Belongs to the class-I aminoacyl-tRNA synthetase family. Monomer.

It localises to the cytoplasm. It carries out the reaction tRNA(Gln) + L-glutamine + ATP = L-glutaminyl-tRNA(Gln) + AMP + diphosphate. In Haemophilus ducreyi (strain 35000HP / ATCC 700724), this protein is Glutamine--tRNA ligase.